Here is an 848-residue protein sequence, read N- to C-terminus: MSSGANITYASRKRRKPVQKTVKPIPAEGIKSNPSKRHRDRLNTELDRLASLLPFPQDVINKLDKLSVLRLSVSYLRAKSFFDVALKSTPADRNGGQDQCRAQIRDWQDLQEGEFLLQALNGFVLVVTADALVFYASSTIQDYLGFQQSDVIHQSVYELIHTEDRAEFQRQLHWALNPDSAQGVDEAHGPPQAAVYYTPDQLPPENASFMERCFRCRLRCLLDNSSGFLAMNFQGRLKYLHGQNKKGKDGALLPPQLALFAIATPLQPPSILEIRTKNFIFRTKHKLDFTPIGCDAKGQLILGYTEVELCTRGSGYQFIHAADMLHCAESHIRMIKTGESGMTVFRLLAKHSRWRWVQSNARLIYRNGRPDYIIVTQRPLTDEEGREHLQKRSTSLPFMFATGEAVLYEISSPFSPIMDPLPIRTKSNTSRKDWAPQSTPSKDSFHPSSLMSALIQQDESIYLCPPSSPAPLDSHFLMGSVSKCGSWQDSFAAAGSEAALKHEQIGHAQDVNLALSGGPSELFPDNKNNDLYNIMRNLGIDFEDIRSMQNEEFFRTDSTAAGEVDFKDIDITDEILTYMQDSLNNSTLMNSACQQQPVTQHLSCMLQERLQLEQQQQLQQPPPQALEPQQQLCQMVCPQQDLGPKHTQINGTFASWNPTPPVSFNCPQQELKHYQLFSSLQGTAQEFPYKPEVDSVPYTQNFAPCNQPLLPEHSKSVQLDFPGRDFEPSLHPTTSNLDFVSCLQVPENQSHGINSQSAMVSPQAYYAGAMSMYQCQPGPQRTPVDQTQYSSEIPGSQAFLSKVQSRGIFNETYSSDLSSIGHAAQTTGHLHHLAEARPLPDITPGGFL.

A propeptide spanning residues 1 to 9 (MSSGANITY) is cleaved from the precursor. The segment at 1–38 (MSSGANITYASRKRRKPVQKTVKPIPAEGIKSNPSKRH) is disordered. 2 short sequence motifs (nuclear localization signal) span residues 12-15 (RKRR) and 36-41 (KRHRDR). The region spanning 26-79 (PAEGIKSNPSKRHRDRLNTELDRLASLLPFPQDVINKLDKLSVLRLSVSYLRAK) is the bHLH domain. The interval 37-65 (RHRDRLNTELDRLASLLPFPQDVINKLDK) is DNA-binding. Required for maintaining the overall integrity of the AHR:ARNT heterodimer and its transcriptional activity stretches follow at residues 49-81 (LASLLPFPQDVINKLDKLSVLRLSVSYLRAKSF), 116-124 (LLQALNGFV), and 260-262 (FAI). The short motif at 63–71 (LDKLSVLRL) is the Nuclear export signal element. A PAS 1 domain is found at 111–175 (QEGEFLLQAL…AEFQRQLHWA (65 aa)). The 71-residue stretch at 266-336 (LQPPSILEIR…CAESHIRMIK (71 aa)) folds into the PAS 2 domain. The PAC domain occupies 342-383 (MTVFRLLAKHSRWRWVQSNARLIYRNGRPDYIIVTQRPLTDE). The interval 421 to 449 (LPIRTKSNTSRKDWAPQSTPSKDSFHPSS) is disordered. Residues 436–449 (PQSTPSKDSFHPSS) are compositionally biased toward polar residues.

As to quaternary structure, homodimer. Heterodimer; efficient DNA binding requires dimerization with another bHLH protein. Interacts with ARNT; the heterodimer ARNT:AHR binds to core DNA sequence 5'-TGCGTG-3' within the dioxin response element (DRE) of target gene promoters and activates their transcription. Binds MYBBP1A. Interacts with coactivators including SRC-1, RIP140 and NOCA7, and with the corepressor SMRT. Interacts with NEDD8 and IVNS1ABP. Interacts with BMAL1. Interacts with HSP90AB1. Interacts with TIPARP; leading to mono-ADP-ribosylation of AHR and subsequent inhibition of AHR. Post-translationally, mono-ADP-ribosylated, leading to inhibit transcription activator activity of AHR.

It is found in the cytoplasm. The protein localises to the nucleus. Functionally, ligand-activated transcription factor that enables cells to adapt to changing conditions by sensing compounds from the environment, diet, microbiome and cellular metabolism, and which plays important roles in development, immunity and cancer. Upon ligand binding, translocates into the nucleus, where it heterodimerizes with ARNT and induces transcription by binding to xenobiotic response elements (XRE). Regulates a variety of biological processes, including angiogenesis, hematopoiesis, drug and lipid metabolism, cell motility and immune modulation. Xenobiotics can act as ligands: upon xenobiotic-binding, activates the expression of multiple phase I and II xenobiotic chemical metabolizing enzyme genes (such as the CYP1A1 gene). Mediates biochemical and toxic effects of halogenated aromatic hydrocarbons. Next to xenobiotics, natural ligands derived from plants, microbiota, and endogenous metabolism are potent AHR agonists. Tryptophan (Trp) derivatives constitute an important class of endogenous AHR ligands. Acts as a negative regulator of anti-tumor immunity: indoles and kynurenic acid generated by Trp catabolism act as ligand and activate AHR, thereby promoting AHR-driven cancer cell motility and suppressing adaptive immunity. Regulates the circadian clock by inhibiting the basal and circadian expression of the core circadian component PER1. Inhibits PER1 by repressing the CLOCK-BMAL1 heterodimer mediated transcriptional activation of PER1. The heterodimer ARNT:AHR binds to core DNA sequence 5'-TGCGTG-3' within the dioxin response element (DRE) of target gene promoters and activates their transcription. This is Aryl hydrocarbon receptor (Ahr) from Mus musculus castaneus (Southeastern Asian house mouse).